Here is a 302-residue protein sequence, read N- to C-terminus: UPF0725 protein At1g23960 (302 aa).

N-acetylalanine is present on alanine 2.

It belongs to the UPF0725 (EMB2204) family.

The protein is UPF0725 protein At1g23960 of Arabidopsis thaliana (Mouse-ear cress).